The following is a 231-amino-acid chain: L-ribulose-5-phosphate 4-epimerase SgbE (231 aa).

Substrate-binding positions include 27–28 (GN), 44–45 (SG), and 74–75 (SS). Residues Asp-76, His-95, and His-97 each coordinate Zn(2+). Catalysis depends on Asp-120, which acts as the Proton donor/acceptor. Position 171 (His-171) interacts with Zn(2+). Residue Tyr-229 is the Proton donor/acceptor of the active site.

This sequence belongs to the aldolase class II family. AraD/FucA subfamily. It depends on Zn(2+) as a cofactor.

The catalysed reaction is L-ribulose 5-phosphate = D-xylulose 5-phosphate. Its function is as follows. Catalyzes the interconversion of L-ribulose 5-phosphate (LRu5P) and D-xylulose 5-phosphate (D-Xu5P) via a retroaldol/aldol mechanism (carbon-carbon bond cleavage analogous to a class II aldolase reaction). May be involved in the utilization of 2,3-diketo-L-gulonate. The protein is L-ribulose-5-phosphate 4-epimerase SgbE of Escherichia coli (strain K12).